Here is a 91-residue protein sequence, read N- to C-terminus: uncharacterized protein (91 aa).

Belongs to the FrmR/RcnR family.

It is found in the cytoplasm. This is an uncharacterized protein from Serratia marcescens.